The primary structure comprises 151 residues: Macrodomain Ter protein (151 aa).

Belongs to the MatP family. Homodimer.

It is found in the cytoplasm. Functionally, required for spatial organization of the terminus region of the chromosome (Ter macrodomain) during the cell cycle. Prevents early segregation of duplicated Ter macrodomains during cell division. Binds specifically to matS, which is a 13 bp signature motif repeated within the Ter macrodomain. The protein is Macrodomain Ter protein of Photorhabdus laumondii subsp. laumondii (strain DSM 15139 / CIP 105565 / TT01) (Photorhabdus luminescens subsp. laumondii).